We begin with the raw amino-acid sequence, 244 residues long: MAKRRGLALDGVLLLDKPVGLSSNHALQRAKRTVDAAKAGHTGTLDPFATGLLVCCMGRATKISGRMLEADKTYQAMLQFGEETDSGDLTGHIVARAPDGFAGVEEAALRDVLSRFVGTIEQIPPMYSALKRDGKPLYEYARAGIELDRPPRQVTIRHIELLSFSGMQAQIDVACSKGTYIRTLAQDIGRALGCHAHLAALRRTHVGPFSLDRAVTLEALQAMPDAKQALLAMNELPAGLLPAT.

Aspartate 46 (nucleophile) is an active-site residue.

The protein belongs to the pseudouridine synthase TruB family. Type 1 subfamily.

It catalyses the reaction uridine(55) in tRNA = pseudouridine(55) in tRNA. Its function is as follows. Responsible for synthesis of pseudouridine from uracil-55 in the psi GC loop of transfer RNAs. The protein is tRNA pseudouridine synthase B of Bordetella parapertussis (strain 12822 / ATCC BAA-587 / NCTC 13253).